A 1916-amino-acid polypeptide reads, in one-letter code: Diacylglycerol kinase eta (1916 aa).

The interval 1 to 36 is disordered; that stretch reads MAHIKLDTLDVVQRPGTTRRSNSNSGRSSACSSGSL. The span at 19–36 shows a compositional bias: low complexity; sequence RRSNSNSGRSSACSSGSL. Residues 82-175 form the PH domain; it reads AIIKEGFLLK…WLGSLKTATT (94 aa). 2 Phorbol-ester/DAG-type zinc fingers span residues 195–245 and 268–319; these read HHHW…IANC and PHQW…AVAC. One can recognise a DAGKc domain in the interval 350–486; it reads GNFSPLLVFV…DRWSIMVFEK (137 aa). Over residues 623-644 the composition is skewed to basic and acidic residues; it reads DEINTKERRSSRSLRSSEKEAL. Disordered stretches follow at residues 623-648, 846-874, 1018-1067, and 1183-1214; these read DEINTKERRSSRSLRSSEKEALQSRA, DRGKEGTEEKKGDIEKEKSSGTDVEKEDN, TLCS…DDNP, and TSTSPTKKSGHGQDISVVVRPPTPLRGDSVKP. The SAM domain occupies 1853–1916; it reads WSVNEVVTWL…LQAIKDLSEN (64 aa).

Belongs to the eukaryotic diacylglycerol kinase family.

The protein localises to the cytoplasm. The enzyme catalyses a 1,2-diacyl-sn-glycerol + ATP = a 1,2-diacyl-sn-glycero-3-phosphate + ADP + H(+). In terms of biological role, phosphorylates diacylglycerol (DAG) to generate phosphatidic acid (PA). The protein is Diacylglycerol kinase eta of Drosophila ananassae (Fruit fly).